The primary structure comprises 176 residues: NAD(P)H-quinone oxidoreductase subunit 6, chloroplastic (176 aa).

5 helical membrane passes run 10-30 (ILVL…VLLT), 33-53 (IYSA…YFLL), 60-80 (VAQL…AVMF), 95-115 (IGDG…MTTI), and 152-172 (FYLP…GAIT).

It belongs to the complex I subunit 6 family. NDH is composed of at least 16 different subunits, 5 of which are encoded in the nucleus.

Its subcellular location is the plastid. The protein localises to the chloroplast thylakoid membrane. It carries out the reaction a plastoquinone + NADH + (n+1) H(+)(in) = a plastoquinol + NAD(+) + n H(+)(out). It catalyses the reaction a plastoquinone + NADPH + (n+1) H(+)(in) = a plastoquinol + NADP(+) + n H(+)(out). In terms of biological role, NDH shuttles electrons from NAD(P)H:plastoquinone, via FMN and iron-sulfur (Fe-S) centers, to quinones in the photosynthetic chain and possibly in a chloroplast respiratory chain. The immediate electron acceptor for the enzyme in this species is believed to be plastoquinone. Couples the redox reaction to proton translocation, and thus conserves the redox energy in a proton gradient. In Zea mays (Maize), this protein is NAD(P)H-quinone oxidoreductase subunit 6, chloroplastic (ndhG).